Here is a 179-residue protein sequence, read N- to C-terminus: Large ribosomal subunit protein uL5 (179 aa).

Belongs to the universal ribosomal protein uL5 family. Part of the 50S ribosomal subunit; part of the 5S rRNA/L5/L18/L25 subcomplex. Contacts the 5S rRNA and the P site tRNA. Forms a bridge to the 30S subunit in the 70S ribosome.

Its function is as follows. This is one of the proteins that bind and probably mediate the attachment of the 5S RNA into the large ribosomal subunit, where it forms part of the central protuberance. In the 70S ribosome it contacts protein S13 of the 30S subunit (bridge B1b), connecting the 2 subunits; this bridge is implicated in subunit movement. Contacts the P site tRNA; the 5S rRNA and some of its associated proteins might help stabilize positioning of ribosome-bound tRNAs. This chain is Large ribosomal subunit protein uL5, found in Thermoanaerobacter sp. (strain X514).